We begin with the raw amino-acid sequence, 550 residues long: 2-succinyl-5-enolpyruvyl-6-hydroxy-3-cyclohexene-1-carboxylate synthase (550 aa).

This sequence belongs to the TPP enzyme family. MenD subfamily. As to quaternary structure, homodimer. Mg(2+) is required as a cofactor. It depends on Mn(2+) as a cofactor. Thiamine diphosphate serves as cofactor.

It catalyses the reaction isochorismate + 2-oxoglutarate + H(+) = 5-enolpyruvoyl-6-hydroxy-2-succinyl-cyclohex-3-ene-1-carboxylate + CO2. Its pathway is quinol/quinone metabolism; 1,4-dihydroxy-2-naphthoate biosynthesis; 1,4-dihydroxy-2-naphthoate from chorismate: step 2/7. The protein operates within quinol/quinone metabolism; menaquinone biosynthesis. Catalyzes the thiamine diphosphate-dependent decarboxylation of 2-oxoglutarate and the subsequent addition of the resulting succinic semialdehyde-thiamine pyrophosphate anion to isochorismate to yield 2-succinyl-5-enolpyruvyl-6-hydroxy-3-cyclohexene-1-carboxylate (SEPHCHC). The sequence is that of 2-succinyl-5-enolpyruvyl-6-hydroxy-3-cyclohexene-1-carboxylate synthase from Flavobacterium psychrophilum (strain ATCC 49511 / DSM 21280 / CIP 103535 / JIP02/86).